Consider the following 233-residue polypeptide: MSTDLQHIRIGLTNNHPCSYLPERQERVAVALDAELHTEQNYQLLMANGFRRSGDTIYKPHCERCHACQPIRISIPDFVLSRSQKRLLSKAKSLRWEMKTEMDAEWFELYSRYICKRHKNGTMYPPKRDEFSRFAQTTWLTTLFLHIYDESNQLLGVAVTDVMAQCSSAFYTFFEPDYPLSLGTLAVLYQVNYCQQNNEQWLYLGYQIDECPAMNYKTRFQRHQRLVNQRWQG.

The protein belongs to the R-transferase family. Bpt subfamily.

It is found in the cytoplasm. It carries out the reaction N-terminal L-glutamyl-[protein] + L-leucyl-tRNA(Leu) = N-terminal L-leucyl-L-glutamyl-[protein] + tRNA(Leu) + H(+). It catalyses the reaction N-terminal L-aspartyl-[protein] + L-leucyl-tRNA(Leu) = N-terminal L-leucyl-L-aspartyl-[protein] + tRNA(Leu) + H(+). Its function is as follows. Functions in the N-end rule pathway of protein degradation where it conjugates Leu from its aminoacyl-tRNA to the N-termini of proteins containing an N-terminal aspartate or glutamate. In Vibrio parahaemolyticus serotype O3:K6 (strain RIMD 2210633), this protein is Aspartate/glutamate leucyltransferase.